A 569-amino-acid polypeptide reads, in one-letter code: MATLAAAPWFRVRLIPELKNSQSLLYCRGNHSYRQSLCSRRRSFSVYASAGDGGDVRVRFAPSPTGNLHVGGARTALFNYLYARAKGGKFILRIEDTDLERSTKESEEAVLRDLSWLGPAWDEGPGIGGEYGPYRQSERNALYKQFAEKLLQSGHVYRCFCSNEELEKMKEIAKLKQLPPVYTGRWASATEEEVVEELAKGTPYTYRFRVPKEGSLKIDDLIRGEVSWNLDTLGDFVIMRSNGQPVYNFCVTVDDATMAISHVIRAEEHLPNTLRQALIYKALGFPMPHFAHVSLILAPDRSKLSKRHGATSVGQFRDMGYLPQAMVNYLALLGWGDGTENEFFTLEQLVEKFTIERVNKSGAIFDSTKLRWMNGQHLRSLPSEELNRIIGERWKDAGIATESQGIFIQDAVLLLKDGIDLITDSEKALSSLLSYPLYETLASAEGKPILEDGVSEVAKSLLAAYDSGELSGALAEGQPGWQKWAKNFGKLLKRKGKSLFMPLRVLLTGKLHGPDIGATTVLLYKAGTSGSVVPQAGFVTFDERFKILREVQWESFSTDVPLSAGAVTR.

59–61 (RFA) is an L-glutamate binding site. Residues 62-72 (PSPTGNLHVGG) carry the 'HIGH' region motif. His69 lines the ATP pocket. Residues Glu95, 247 to 251 (YNFCV), and Arg265 contribute to the L-glutamate site. ATP is bound by residues Glu268 and 303–307 (KLSKR). The short motif at 303-307 (KLSKR) is the 'KMSKS' region element.

This sequence belongs to the class-I aminoacyl-tRNA synthetase family. Glutamate--tRNA ligase type 1 subfamily.

It is found in the plastid. Its subcellular location is the chloroplast. The protein localises to the mitochondrion. It carries out the reaction tRNA(Glu) + L-glutamate + ATP = L-glutamyl-tRNA(Glu) + AMP + diphosphate. Its function is as follows. Catalyzes the attachment of glutamate to tRNA(Glu) in a two-step reaction: glutamate is first activated by ATP to form Glu-AMP and then transferred to the acceptor end of tRNA(Glu). This is Glutamate--tRNA ligase, chloroplastic/mitochondrial from Nicotiana tabacum (Common tobacco).